A 211-amino-acid chain; its full sequence is Probable nicotinate-nucleotide adenylyltransferase (211 aa).

The protein belongs to the NadD family.

The catalysed reaction is nicotinate beta-D-ribonucleotide + ATP + H(+) = deamido-NAD(+) + diphosphate. It participates in cofactor biosynthesis; NAD(+) biosynthesis; deamido-NAD(+) from nicotinate D-ribonucleotide: step 1/1. Functionally, catalyzes the reversible adenylation of nicotinate mononucleotide (NaMN) to nicotinic acid adenine dinucleotide (NaAD). The protein is Probable nicotinate-nucleotide adenylyltransferase of Corynebacterium kroppenstedtii (strain DSM 44385 / JCM 11950 / CIP 105744 / CCUG 35717).